Consider the following 258-residue polypeptide: Synapse differentiation-inducing gene protein 1 (258 aa).

Residues methionine 1–histidine 181 are Cytoplasmic-facing. Serine 137 carries the post-translational modification Phosphoserine. Residues leucine 182–tyrosine 202 form a helical membrane-spanning segment. Topologically, residues leucine 203–phenylalanine 228 are extracellular. An intramembrane region (helical) is located at residues leucine 229–isoleucine 249. The Extracellular portion of the chain corresponds to alanine 250–leucine 258.

This sequence belongs to the CD225/Dispanin family. Homodimer. Interacts with GRIA1 and GRIA2.

It localises to the cell membrane. The protein resides in the early endosome membrane. Its subcellular location is the postsynaptic density membrane. It is found in the synapse. The protein localises to the cell projection. It localises to the dendrite. The protein resides in the dendritic spine. May regulate AMPA receptor content at nascent synapses, and have a role in postsynaptic development and maturation. This chain is Synapse differentiation-inducing gene protein 1 (SYNDIG1), found in Macaca fascicularis (Crab-eating macaque).